We begin with the raw amino-acid sequence, 337 residues long: tRNA N6-adenosine threonylcarbamoyltransferase (337 aa).

Fe cation-binding residues include His114 and His118. Residues 136–140 (LVSGG), Asp169, Gly182, Asp186, and Asn275 contribute to the substrate site. Asp301 contacts Fe cation.

This sequence belongs to the KAE1 / TsaD family. Fe(2+) is required as a cofactor.

It is found in the cytoplasm. It carries out the reaction L-threonylcarbamoyladenylate + adenosine(37) in tRNA = N(6)-L-threonylcarbamoyladenosine(37) in tRNA + AMP + H(+). Functionally, required for the formation of a threonylcarbamoyl group on adenosine at position 37 (t(6)A37) in tRNAs that read codons beginning with adenine. Is involved in the transfer of the threonylcarbamoyl moiety of threonylcarbamoyl-AMP (TC-AMP) to the N6 group of A37, together with TsaE and TsaB. TsaD likely plays a direct catalytic role in this reaction. In Streptococcus uberis (strain ATCC BAA-854 / 0140J), this protein is tRNA N6-adenosine threonylcarbamoyltransferase.